A 336-amino-acid chain; its full sequence is Aromatic prenyltransferase (336 aa).

Belongs to the aromatic prenyltransferase family.

In terms of biological role, prenyltransferase that attaches isoprenoid moieties to carbon atoms of aromatic substrates in an enzyme-catalyzed Friedel-Crafts reaction. Shows specificity for dimethylallyl diphosphate (DMAPP) and does not accept geranyl diphosphate (GPP) or isopentenyl diphosphate (IPP). Prenylates the artificial substrate 2,7-dihydroxynaphthalene (2,7-DHN), as well as dihydrophenazine-1-carboxylic acid at a lower level. Only traces of products are detected with aspulvinone E, flaviolin, or 4-hydroxybenzoic acid as substrates; and no product is formed with L-tryptophan, L-tyrosine, or 4-hydroxyphenylpyruvate. Ptf seems no to be involved in the prenylation reaction in the biosynthesis of aspulvinone H and J and the physiological function of ptf remains unknown. The protein is Aromatic prenyltransferase of Aspergillus terreus (strain NIH 2624 / FGSC A1156).